A 1237-amino-acid chain; its full sequence is Rho guanine nucleotide exchange factor 10-like protein (1237 aa).

Disordered stretches follow at residues 1–117 and 132–203; these read MASS…SSRR and YDDV…QPKM. Residues 25–45 are compositionally biased toward acidic residues; that stretch reads EAEDDPGEGFEFDDSDDDEDT. Phosphoserine is present on S39. Residues Y132 and Y153 each carry the phosphotyrosine modification. Composition is skewed to basic and acidic residues over residues 146-163 and 184-194; these read EAER…RAPQ and EEAKPEAEPTK. S241 carries the post-translational modification Phosphoserine. Positions 276–463 constitute a DH domain; that stretch reads VRRHILGSIV…ETLAEKLNEQ (188 aa). Disordered regions lie at residues 1091 to 1118 and 1142 to 1164; these read QEEA…PASH and PGPL…HSEE.

As to quaternary structure, interacts with RHOA, RHOB and RHOC.

It is found in the cytoplasm. In terms of biological role, acts as a guanine nucleotide exchange factor (GEF) for RHOA, RHOB and RHOC. This chain is Rho guanine nucleotide exchange factor 10-like protein (ARHGEF10L), found in Bos taurus (Bovine).